A 159-amino-acid polypeptide reads, in one-letter code: 2-C-methyl-D-erythritol 2,4-cyclodiphosphate synthase (159 aa).

A divalent metal cation contacts are provided by Asp10 and His12. 4-CDP-2-C-methyl-D-erythritol 2-phosphate contacts are provided by residues 10–12 (DVH) and 36–37 (HS). His44 is a binding site for a divalent metal cation. Residues 58–60 (DIG), 134–137 (TTSE), Phe141, and Arg144 contribute to the 4-CDP-2-C-methyl-D-erythritol 2-phosphate site.

This sequence belongs to the IspF family. In terms of assembly, homotrimer. It depends on a divalent metal cation as a cofactor.

The enzyme catalyses 4-CDP-2-C-methyl-D-erythritol 2-phosphate = 2-C-methyl-D-erythritol 2,4-cyclic diphosphate + CMP. It participates in isoprenoid biosynthesis; isopentenyl diphosphate biosynthesis via DXP pathway; isopentenyl diphosphate from 1-deoxy-D-xylulose 5-phosphate: step 4/6. Functionally, involved in the biosynthesis of isopentenyl diphosphate (IPP) and dimethylallyl diphosphate (DMAPP), two major building blocks of isoprenoid compounds. Catalyzes the conversion of 4-diphosphocytidyl-2-C-methyl-D-erythritol 2-phosphate (CDP-ME2P) to 2-C-methyl-D-erythritol 2,4-cyclodiphosphate (ME-CPP) with a corresponding release of cytidine 5-monophosphate (CMP). This is 2-C-methyl-D-erythritol 2,4-cyclodiphosphate synthase from Cereibacter sphaeroides (strain ATCC 17025 / ATH 2.4.3) (Rhodobacter sphaeroides).